The sequence spans 441 residues: ATP-dependent protease ATPase subunit HslU (441 aa).

Residues Val-18, 60–65, Asp-254, Glu-319, and Arg-391 each bind ATP; that span reads GVGKTE.

The protein belongs to the ClpX chaperone family. HslU subfamily. In terms of assembly, a double ring-shaped homohexamer of HslV is capped on each side by a ring-shaped HslU homohexamer. The assembly of the HslU/HslV complex is dependent on binding of ATP.

The protein localises to the cytoplasm. ATPase subunit of a proteasome-like degradation complex; this subunit has chaperone activity. The binding of ATP and its subsequent hydrolysis by HslU are essential for unfolding of protein substrates subsequently hydrolyzed by HslV. HslU recognizes the N-terminal part of its protein substrates and unfolds these before they are guided to HslV for hydrolysis. The polypeptide is ATP-dependent protease ATPase subunit HslU (Verminephrobacter eiseniae (strain EF01-2)).